The primary structure comprises 951 residues: Spliceosome associated factor 3, U4/U6 recycling protein (951 aa).

Positions 1–58 (MAATGNEEQTLLPDIEEEAEGMEREMESEDDEEEGMGVEHSEEEDEEDTSEDERENEA) are disordered. Residues 14-56 (DIEEEAEGMEREMESEDDEEEGMGVEHSEEEDEEDTSEDEREN) show a composition bias toward acidic residues. 8 HAT repeats span residues 88–120 (GKLH…DEIR), 126–157 (SDRE…YSIG), 163–199 (GGIE…FEIV), 222–255 (AQLE…WADD), 304–336 (GDPA…YLDR), 339–371 (KIKD…ALER), 374–410 (ADHQ…YLRR), and 467–500 (KNMQ…LERS). The segment at 517-941 (CTSDYPEHVC…LDTQTKSLSN (425 aa)) is necessary and sufficient for U6 snRNA binding. Residues 533 to 593 (ERVEGSLEDW…VKADKKAQKK (61 aa)) adopt a coiled-coil conformation. Positions 567 to 581 (EALHARQEEEKAEQR) are enriched in basic and acidic residues. The interval 567 to 686 (EALHARQEEE…HDMPKEQRKD (120 aa)) is disordered. Residues 582 to 596 (RKVKADKKAQKKGQK) are compositionally biased toward basic residues. Acidic residues predominate over residues 608–619 (DDDEEEWGEEAE). Residues 674-686 (RQPHDMPKEQRKD) show a composition bias toward basic and acidic residues. 2 RRM domains span residues 688 to 766 (NCVF…PCVD) and 785 to 862 (HKIF…ISNP). The segment at 905-938 (RQSTPDAKAENGTISAPHATVTDGETSLDTQTKS) is disordered. A compositionally biased stretch (polar residues) spans 927–938 (DGETSLDTQTKS).

It localises to the nucleus. The protein localises to the nucleoplasm. The protein resides in the cajal body. Its subcellular location is the nucleus speckle. It is found in the cytoplasm. U6 snRNP-binding protein that functions as a recycling factor of the splicing machinery. Promotes the initial reassembly of U4 and U6 snRNPs following their ejection from the spliceosome during its maturation. May also function as a substrate targeting factor for deubiquitinases and mediate the deubiquitination of components of the spliceosome and histones. The protein is Spliceosome associated factor 3, U4/U6 recycling protein of Danio rerio (Zebrafish).